A 310-amino-acid polypeptide reads, in one-letter code: Proline iminopeptidase (310 aa).

Residues 33–290 (PVIFLHGGPG…RVVQAGHRAF (258 aa)) enclose the AB hydrolase-1 domain. S107 functions as the Nucleophile in the catalytic mechanism. The active site involves D260. Catalysis depends on H287, which acts as the Proton donor.

The protein belongs to the peptidase S33 family.

It localises to the cytoplasm. The enzyme catalyses Release of N-terminal proline from a peptide.. Specifically catalyzes the removal of N-terminal proline residues from peptides. The sequence is that of Proline iminopeptidase (pip) from Neisseria meningitidis serogroup B (strain ATCC BAA-335 / MC58).